Consider the following 294-residue polypeptide: Probable endonuclease 4 (294 aa).

Residues His78, His118, Glu155, Asp189, His192, His226, Asp239, His241, and Glu271 each contribute to the Zn(2+) site.

Belongs to the AP endonuclease 2 family. The cofactor is Zn(2+).

The enzyme catalyses Endonucleolytic cleavage to 5'-phosphooligonucleotide end-products.. In terms of biological role, endonuclease IV plays a role in DNA repair. It cleaves phosphodiester bonds at apurinic or apyrimidinic (AP) sites, generating a 3'-hydroxyl group and a 5'-terminal sugar phosphate. The sequence is that of Probable endonuclease 4 from Oleidesulfovibrio alaskensis (strain ATCC BAA-1058 / DSM 17464 / G20) (Desulfovibrio alaskensis).